The sequence spans 446 residues: Mitochondrial ribonuclease P protein 1 homolog (446 aa).

The N-terminal 24 residues, 1-24 (MLKHFARWRLGSQLLKGCAAPVRQ), are a transit peptide targeting the mitochondrion. The interval 41–67 (PQKKFVNPFSQPAPALSNDTISENKEE) is disordered. Phosphoserine occurs at positions 50 and 57. Threonine 60 is modified (phosphothreonine). Serine 62 is subject to Phosphoserine. Residues 119 to 158 (LWQIEMKKEADQRKKAERAKEAERRVAEMRKEREENTHII) are a coiled coil. Positions 179–373 (QNNRLTRAMQ…KHVPRRKVVQ (195 aa)) constitute an SAM-dependent MTase TRM10-type domain.

It belongs to the class IV-like SAM-binding methyltransferase superfamily. TRM10 family. As to quaternary structure, component of mitochondrial ribonuclease P, a complex composed of rswl/MRPP1, scu/MRPP2 and mldr/MRPP3.

The protein resides in the mitochondrion. Functionally, mitochondrial tRNA N1-methyltransferase involved in mitochondrial tRNA maturation. Component of mitochondrial ribonuclease P, a complex composed of rswl/MRPP1, scu/MRPP2 and mldr/MRPP3., which cleaves tRNA molecules in their 5'-ends. Essential for the structural and functional integrity of mitochondria. Function is essential for pupal development. This chain is Mitochondrial ribonuclease P protein 1 homolog, found in Drosophila melanogaster (Fruit fly).